The following is a 310-amino-acid chain: Porphobilinogen deaminase (310 aa).

Position 242 is an S-(dipyrrolylmethanemethyl)cysteine (cysteine 242).

Belongs to the HMBS family. Monomer. It depends on dipyrromethane as a cofactor.

It catalyses the reaction 4 porphobilinogen + H2O = hydroxymethylbilane + 4 NH4(+). The protein operates within porphyrin-containing compound metabolism; protoporphyrin-IX biosynthesis; coproporphyrinogen-III from 5-aminolevulinate: step 2/4. In terms of biological role, tetrapolymerization of the monopyrrole PBG into the hydroxymethylbilane pre-uroporphyrinogen in several discrete steps. This Halorhodospira halophila (strain DSM 244 / SL1) (Ectothiorhodospira halophila (strain DSM 244 / SL1)) protein is Porphobilinogen deaminase.